A 603-amino-acid chain; its full sequence is Polypeptide N-acetylgalactosaminyltransferase 10 (603 aa).

Residues 1–11 (MRRKEKRLLQA) lie on the Cytoplasmic side of the membrane. The helical; Signal-anchor for type II membrane protein transmembrane segment at 12-31 (VALVLAALVLLPNVGLWALY) threads the bilayer. The Lumenal portion of the chain corresponds to 32-603 (RERQPDGTPG…STVLEKFNRN (572 aa)). Residues 38–59 (GTPGGSGAAVAPAAGQGSHSRQ) form a disordered region. Positions 45-55 (AAVAPAAGQGS) are enriched in low complexity. Asparagine 124 and asparagine 146 each carry an N-linked (GlcNAc...) asparagine glycan. 5 disulfide bridges follow: cysteine 135/cysteine 365, cysteine 356/cysteine 432, cysteine 471/cysteine 488, cysteine 523/cysteine 538, and cysteine 563/cysteine 578. The segment at 144–253 (LPNTSIIIPF…VNWLPPLLDR (110 aa)) is catalytic subdomain A. Residues histidine 154, glutamate 156, aspartate 185, and arginine 214 each coordinate substrate. Position 237 (aspartate 237) interacts with Mn(2+). Serine 238 contacts substrate. Histidine 239 serves as a coordination point for Mn(2+). Residues 311–373 (PFESPVMAGG…PCSRVGHIYR (63 aa)) form a catalytic subdomain B region. Tryptophan 342 is a binding site for substrate. Histidine 370 is a binding site for Mn(2+). Positions 373 and 378 each coordinate substrate. The tract at residues 373–384 (RKYVPYKVPAGV) is flexible loop. Residues 458 to 590 (AAWGEIRNVG…SSLTQQWLFE (133 aa)) enclose the Ricin B-type lectin domain. Asparagine 593 carries N-linked (GlcNAc...) asparagine glycosylation.

It belongs to the glycosyltransferase 2 family. GalNAc-T subfamily. Mn(2+) serves as cofactor. Widely expressed. Expressed at high level in small intestine, and at intermediate levels in stomach, pancreas, ovary, thyroid gland and spleen. Weakly expressed in other tissues.

The protein resides in the golgi apparatus membrane. It carries out the reaction L-seryl-[protein] + UDP-N-acetyl-alpha-D-galactosamine = a 3-O-[N-acetyl-alpha-D-galactosaminyl]-L-seryl-[protein] + UDP + H(+). The catalysed reaction is L-threonyl-[protein] + UDP-N-acetyl-alpha-D-galactosamine = a 3-O-[N-acetyl-alpha-D-galactosaminyl]-L-threonyl-[protein] + UDP + H(+). Its pathway is protein modification; protein glycosylation. Functionally, catalyzes the initial reaction in O-linked oligosaccharide biosynthesis, the transfer of an N-acetyl-D-galactosamine residue to a serine or threonine residue on the protein receptor. Has activity toward Muc5Ac and EA2 peptide substrates. The sequence is that of Polypeptide N-acetylgalactosaminyltransferase 10 (GALNT10) from Homo sapiens (Human).